The sequence spans 335 residues: NADP(+)-dependent glycerol-3-phosphate dehydrogenase (335 aa).

Position 137 (glycine 137) interacts with sn-glycerol 3-phosphate. Alanine 141 is a binding site for NADPH. 4 residues coordinate sn-glycerol 3-phosphate: lysine 192, aspartate 250, arginine 259, and asparagine 260. Lysine 192 serves as the catalytic Proton acceptor. An NADPH-binding site is contributed by arginine 259. Positions 287 and 289 each coordinate NADPH.

Belongs to the NAD-dependent glycerol-3-phosphate dehydrogenase family. In terms of assembly, homodimer.

The protein localises to the cytoplasm. It carries out the reaction sn-glycerol 3-phosphate + NADP(+) = dihydroxyacetone phosphate + NADPH + H(+). Its function is as follows. Catalyzes the reduction of the glycolytic intermediate dihydroxyacetone phosphate (DHAP) to sn-glycerol 3-phosphate (G3P). Shows a 15-fold preference for NADPH over NADH in the reduction process. Can also catalyze the reverse reaction in vitro. Shows no activity with dihydroxyacetone, glycerol, glycerol-2-phosphate, D-glyceraldehyde-3-phosphate, DL-glyceraldehyde, D-erythrose-4-phosphate, D-fructose-6-phosphate, beta-D-glucose-6-phosphate, or alpha-D-galactose-1-phosphate. The sequence is that of NADP(+)-dependent glycerol-3-phosphate dehydrogenase from Archaeoglobus fulgidus (strain ATCC 49558 / DSM 4304 / JCM 9628 / NBRC 100126 / VC-16).